Here is a 185-residue protein sequence, read N- to C-terminus: Ribosome-recycling factor (185 aa).

It belongs to the RRF family.

It localises to the cytoplasm. In terms of biological role, responsible for the release of ribosomes from messenger RNA at the termination of protein biosynthesis. May increase the efficiency of translation by recycling ribosomes from one round of translation to another. The protein is Ribosome-recycling factor of Marinomonas sp. (strain MWYL1).